Here is a 517-residue protein sequence, read N- to C-terminus: Phenol 2-monooxygenase, oxygenase component DmpN (517 aa).

Fe cation is bound by residues glutamate 109, glutamate 139, histidine 142, glutamate 200, glutamate 234, and histidine 237.

The protein belongs to the TmoA/XamoA family. As to quaternary structure, the multicomponent enzyme phenol hydroxylase is formed by DmpL (P1 component), DmpM (P2 component), DmpN (P3 component), DmpO (P4 component) and DmpP (P5 component). The oxygenase component is a dimer composed of three subunits, DmpL, DmpN and DmpO (DmpLNO). DmpN interacts with the auxiliary protein DmpK (P0 component). Fe(2+) serves as cofactor.

It catalyses the reaction phenol + NADH + O2 + H(+) = catechol + NAD(+) + H2O. Its pathway is aromatic compound metabolism; phenol degradation. With respect to regulation, requires DmpM for efficient turnover. The activity of DmpLNO oxygenase is inhibited by dithiothreitol (DTT) by a mechanism apparently involving H(2)O(2) generation. Functionally, part of a multicomponent enzyme which catalyzes the degradation of phenol and some of its methylated derivatives. DmpL, DmpN and DmpO form the oxygenase component of the complex. Required for growth on phenol and for in vitro phenol hydroxylase activity. This Pseudomonas sp. (strain CF600) protein is Phenol 2-monooxygenase, oxygenase component DmpN.